Reading from the N-terminus, the 339-residue chain is Glycerol-3-phosphate dehydrogenase [NAD(P)+] (339 aa).

The NADPH site is built by Ser15, Tyr16, His36, and Lys110. Residues Lys110, Gly139, and Thr141 each coordinate sn-glycerol 3-phosphate. NADPH is bound at residue Ala143. Sn-glycerol 3-phosphate contacts are provided by Lys195, Asp248, Ser258, Arg259, and Asn260. The active-site Proton acceptor is the Lys195. An NADPH-binding site is contributed by Arg259. NADPH contacts are provided by Val283 and Glu285.

It belongs to the NAD-dependent glycerol-3-phosphate dehydrogenase family.

It is found in the cytoplasm. It catalyses the reaction sn-glycerol 3-phosphate + NAD(+) = dihydroxyacetone phosphate + NADH + H(+). It carries out the reaction sn-glycerol 3-phosphate + NADP(+) = dihydroxyacetone phosphate + NADPH + H(+). The protein operates within membrane lipid metabolism; glycerophospholipid metabolism. Functionally, catalyzes the reduction of the glycolytic intermediate dihydroxyacetone phosphate (DHAP) to sn-glycerol 3-phosphate (G3P), the key precursor for phospholipid synthesis. This Shigella dysenteriae serotype 1 (strain Sd197) protein is Glycerol-3-phosphate dehydrogenase [NAD(P)+].